The following is an 801-amino-acid chain: Phenylalanine--tRNA ligase beta subunit (801 aa).

Residues 39-153 (AEGLSKLVVG…EEAVPGDAIF (115 aa)) form the tRNA-binding domain. The region spanning 406-481 (TEPVEVSTSL…RIYGYDKLPT (76 aa)) is the B5 domain. Mg(2+) is bound by residues Asp459, Asp465, Glu468, and Glu469. Residues 708 to 801 (TKFPAMTRDI…LTEQVGAEVR (94 aa)) form the FDX-ACB domain.

This sequence belongs to the phenylalanyl-tRNA synthetase beta subunit family. Type 1 subfamily. Tetramer of two alpha and two beta subunits. It depends on Mg(2+) as a cofactor.

The protein localises to the cytoplasm. The enzyme catalyses tRNA(Phe) + L-phenylalanine + ATP = L-phenylalanyl-tRNA(Phe) + AMP + diphosphate + H(+). The protein is Phenylalanine--tRNA ligase beta subunit of Streptococcus pyogenes serotype M18 (strain MGAS8232).